A 168-amino-acid chain; its full sequence is 2-C-methyl-D-erythritol 2,4-cyclodiphosphate synthase (168 aa).

Aspartate 15 and histidine 17 together coordinate a divalent metal cation. Residues 15 to 17 (DVH) and 45 to 46 (HS) each bind 4-CDP-2-C-methyl-D-erythritol 2-phosphate. Residue histidine 53 coordinates a divalent metal cation. 4-CDP-2-C-methyl-D-erythritol 2-phosphate contacts are provided by residues 72-76 (FPNSD), phenylalanine 150, and arginine 153.

This sequence belongs to the IspF family. As to quaternary structure, homotrimer. A divalent metal cation serves as cofactor.

The enzyme catalyses 4-CDP-2-C-methyl-D-erythritol 2-phosphate = 2-C-methyl-D-erythritol 2,4-cyclic diphosphate + CMP. It participates in isoprenoid biosynthesis; isopentenyl diphosphate biosynthesis via DXP pathway; isopentenyl diphosphate from 1-deoxy-D-xylulose 5-phosphate: step 4/6. In terms of biological role, involved in the biosynthesis of isopentenyl diphosphate (IPP) and dimethylallyl diphosphate (DMAPP), two major building blocks of isoprenoid compounds. Catalyzes the conversion of 4-diphosphocytidyl-2-C-methyl-D-erythritol 2-phosphate (CDP-ME2P) to 2-C-methyl-D-erythritol 2,4-cyclodiphosphate (ME-CPP) with a corresponding release of cytidine 5-monophosphate (CMP). The sequence is that of 2-C-methyl-D-erythritol 2,4-cyclodiphosphate synthase from Anaplasma phagocytophilum (strain HZ).